The sequence spans 287 residues: Urease accessory protein UreD (287 aa).

Belongs to the UreD family. In terms of assembly, ureD, UreF and UreG form a complex that acts as a GTP-hydrolysis-dependent molecular chaperone, activating the urease apoprotein by helping to assemble the nickel containing metallocenter of UreC. The UreE protein probably delivers the nickel.

Its subcellular location is the cytoplasm. In terms of biological role, required for maturation of urease via the functional incorporation of the urease nickel metallocenter. This Aliivibrio fischeri (strain ATCC 700601 / ES114) (Vibrio fischeri) protein is Urease accessory protein UreD.